We begin with the raw amino-acid sequence, 115 residues long: MKFVLLFGVLLVTLFSYSSAEMLDDFDQADEDELLSLIEKEEARAKECTPRFYDCSHDRNSCCRSELFKDVCTCFYPEGGDNEVCTCQQPKHLKYMEKAVDKAKKFGGKIKKWFG.

Positions 1–20 (MKFVLLFGVLLVTLFSYSSA) are cleaved as a signal peptide. Residues 21–44 (EMLDDFDQADEDELLSLIEKEEAR) constitute a propeptide that is removed on maturation. 4 disulfide bridges follow: C48-C63, C55-C72, C62-C87, and C74-C85.

The protein belongs to the neurotoxin 19 (CSTX) family. 01 subfamily. Expressed by the venom gland.

It localises to the secreted. This is U3-lycotoxin-Ls1f from Lycosa singoriensis (Wolf spider).